A 438-amino-acid polypeptide reads, in one-letter code: Glutaryl-CoA dehydrogenase, mitochondrial (438 aa).

A mitochondrion-targeting transit peptide spans 1–44 (MALRGVSVQLLSRVPGLRVFRTWVSSAAQTEKVGRTQSQLAKSS). Residues 138 to 139 (RS) and Ser186 contribute to the substrate site. Residues 177-186 (FGLTEPNSGS), Ser186, and 212-214 (WIT) contribute to the FAD site. Position 240 is an N6-acetyllysine (Lys240). A substrate-binding site is contributed by 287-294 (FGCLNNGR). FAD is bound by residues Arg319, Gln330, and 387 to 391 (DMLGG). The active-site Proton acceptor is Glu414. Gly415 provides a ligand contact to substrate. Residues Thr416, 416–418 (THD), and Phe434 contribute to the FAD site.

Belongs to the acyl-CoA dehydrogenase family. In terms of assembly, homotetramer. Requires FAD as cofactor.

It localises to the mitochondrion matrix. It catalyses the reaction glutaryl-CoA + oxidized [electron-transfer flavoprotein] + 2 H(+) = (2E)-butenoyl-CoA + reduced [electron-transfer flavoprotein] + CO2. It participates in amino-acid metabolism; lysine degradation. Its pathway is amino-acid metabolism; tryptophan metabolism. Its function is as follows. Catalyzes the oxidative decarboxylation of glutaryl-CoA to crotonyl-CoA and CO(2) in the degradative pathway of L-lysine, L-hydroxylysine, and L-tryptophan metabolism. It uses electron transfer flavoprotein as its electron acceptor. This Macaca fascicularis (Crab-eating macaque) protein is Glutaryl-CoA dehydrogenase, mitochondrial (GCDH).